A 261-amino-acid chain; its full sequence is tRNA pseudouridine synthase A (261 aa).

Aspartate 51 functions as the Nucleophile in the catalytic mechanism. Tyrosine 109 is a binding site for substrate.

Belongs to the tRNA pseudouridine synthase TruA family. In terms of assembly, homodimer.

The enzyme catalyses uridine(38/39/40) in tRNA = pseudouridine(38/39/40) in tRNA. Formation of pseudouridine at positions 38, 39 and 40 in the anticodon stem and loop of transfer RNAs. The sequence is that of tRNA pseudouridine synthase A from Photobacterium profundum (strain SS9).